The following is a 442-amino-acid chain: Inner membrane protein PPF-1, chloroplastic (442 aa).

Residues 1 to 108 (MAKTLISSPS…EFVLKVLKDG (108 aa)) lie on the Lumenal side of the membrane. Residues 109–129 (LSSVHVPYSYGFAIILLTVIV) traverse the membrane as a helical segment. Residues 130–183 (KAATLPLTKQQVESTLAMQNLQPKIKAIQERYAGNQERIQLETSRLYTQAGVNP) are Stromal-facing. The chain crosses the membrane as a helical span at residues 184–204 (LAGCLPTLATIPVWIGLYQAL). Residues 205–296 (SNVANEGLLT…QKNTLLIFKF (92 aa)) are Lumenal-facing. Residues 297-317 (LPLMIGYFSLSVPSGLTIYWF) traverse the membrane as a helical segment. Residues 318 to 442 (TNNVLSTAQQ…SKRSKRKPVA (125 aa)) lie on the Stromal side of the membrane. Disordered regions lie at residues 350-371 (AGQA…RQLK) and 390-442 (PLAS…KPVA). The span at 358-371 (SKPEKGGERFRQLK) shows a compositional bias: basic and acidic residues. The span at 414–427 (ESNTSKVSQEVQSF) shows a compositional bias: polar residues. The span at 431–442 (RRSKRSKRKPVA) shows a compositional bias: basic residues.

It belongs to the OXA1/ALB3/YidC (TC 2.A.9.2) family. Highly expressed in apical buds. Low levels of expression in leaves. Not expressed in roots, and stems.

The protein localises to the plastid. It is found in the chloroplast thylakoid membrane. Functionally, may be required for the insertion of some integral membrane proteins into the chloroplast thylakoid membrane. May play a role in inhibiting senescence. This chain is Inner membrane protein PPF-1, chloroplastic (PPF-1), found in Pisum sativum (Garden pea).